Consider the following 275-residue polypeptide: Dermonecrotic toxin SpeSicTox-betaIIA2ii (275 aa).

The active site involves H5. The Mg(2+) site is built by E25 and D27. The active-site Nucleophile is H41. 2 disulfide bridges follow: C45/C51 and C47/C190. D85 lines the Mg(2+) pocket.

This sequence belongs to the arthropod phospholipase D family. Class II subfamily. The cofactor is Mg(2+). Expressed by the venom gland.

The protein localises to the secreted. It catalyses the reaction an N-(acyl)-sphingosylphosphocholine = an N-(acyl)-sphingosyl-1,3-cyclic phosphate + choline. It carries out the reaction an N-(acyl)-sphingosylphosphoethanolamine = an N-(acyl)-sphingosyl-1,3-cyclic phosphate + ethanolamine. The catalysed reaction is a 1-acyl-sn-glycero-3-phosphocholine = a 1-acyl-sn-glycero-2,3-cyclic phosphate + choline. The enzyme catalyses a 1-acyl-sn-glycero-3-phosphoethanolamine = a 1-acyl-sn-glycero-2,3-cyclic phosphate + ethanolamine. Its function is as follows. Dermonecrotic toxins cleave the phosphodiester linkage between the phosphate and headgroup of certain phospholipids (sphingolipid and lysolipid substrates), forming an alcohol (often choline) and a cyclic phosphate. This toxin acts on sphingomyelin (SM). It may also act on ceramide phosphoethanolamine (CPE), lysophosphatidylcholine (LPC) and lysophosphatidylethanolamine (LPE), but not on lysophosphatidylserine (LPS), and lysophosphatidylglycerol (LPG). It acts by transphosphatidylation, releasing exclusively cyclic phosphate products as second products. Induces dermonecrosis, hemolysis, increased vascular permeability, edema, inflammatory response, and platelet aggregation. The chain is Dermonecrotic toxin SpeSicTox-betaIIA2ii from Sicarius peruensis (Six-eyed sand spider).